Here is a 231-residue protein sequence, read N- to C-terminus: 5'-methylthioadenosine/S-adenosylhomocysteine nucleosidase (231 aa).

The Proton acceptor role is filled by glutamate 12. Substrate is bound by residues glycine 78, valine 153, and methionine 174–glutamate 175. The active-site Proton donor is aspartate 198.

The protein belongs to the PNP/UDP phosphorylase family. MtnN subfamily.

The catalysed reaction is S-adenosyl-L-homocysteine + H2O = S-(5-deoxy-D-ribos-5-yl)-L-homocysteine + adenine. The enzyme catalyses S-methyl-5'-thioadenosine + H2O = 5-(methylsulfanyl)-D-ribose + adenine. It catalyses the reaction 5'-deoxyadenosine + H2O = 5-deoxy-D-ribose + adenine. The protein operates within amino-acid biosynthesis; L-methionine biosynthesis via salvage pathway; S-methyl-5-thio-alpha-D-ribose 1-phosphate from S-methyl-5'-thioadenosine (hydrolase route): step 1/2. Catalyzes the irreversible cleavage of the glycosidic bond in both 5'-methylthioadenosine (MTA) and S-adenosylhomocysteine (SAH/AdoHcy) to adenine and the corresponding thioribose, 5'-methylthioribose and S-ribosylhomocysteine, respectively. Also cleaves 5'-deoxyadenosine, a toxic by-product of radical S-adenosylmethionine (SAM) enzymes, into 5-deoxyribose and adenine. This is 5'-methylthioadenosine/S-adenosylhomocysteine nucleosidase from Vibrio vulnificus (strain YJ016).